The primary structure comprises 307 residues: Zygote arrest protein 2.L (307 aa).

The interval 138-200 is disordered; that stretch reads LPQGGRLPKK…EEPGNEEQTK (63 aa). Positions 156 to 186 are enriched in basic and acidic residues; that stretch reads LKERAPSPEDKEREKVSEKEPDTKDELEKRP. Residues 208–293 form a 3CxxC-type zinc finger; sequence QKYGYFHCKD…QELCGRCKNK (86 aa).

The protein belongs to the ZAR1 family. Expressed in oocytes.

It localises to the cytoplasm. It is found in the cytoplasmic ribonucleoprotein granule. MRNA-binding protein required for maternal mRNA storage, translation and degradation during oocyte maturation. Probably promotes formation of some phase-separated membraneless compartment that stores maternal mRNAs in oocytes: acts by undergoing liquid-liquid phase separation upon binding to maternal mRNAs. Binds to the 3'-UTR of maternal mRNAs, inhibiting their translation. This Xenopus laevis (African clawed frog) protein is Zygote arrest protein 2.L (zar2.L).